The chain runs to 266 residues: MTAFTDSITHAHSPSPLTKGTPLALDAITKHYGHRTVLNDVQLRIPSGQFVAIVGRSGCGKSTLLRLLAGLEAASSGELLTGTAPLSSAKDDTRLMFQEARLLPWKKVIDNVGLGLRGNWREKAQDALTSVGLADRANDWPAALSGGQKQRVALARALIHHPRLLLLDEPLGALDALTRIEMQSLIENIWLQHGFTVLLVTHDVSEAIALADRVILIEEGRVGLDITVDLPRPRRRGSAKLAELEARVLERVLAPTSSPLPQQAAI.

Residues 23–244 form the ABC transporter domain; it reads LALDAITKHY…RRGSAKLAEL (222 aa). 55–62 is a binding site for ATP; it reads GRSGCGKS.

The protein belongs to the ABC transporter superfamily. Aliphatic sulfonates importer (TC 3.A.1.17.2) family. As to quaternary structure, the complex is composed of two ATP-binding proteins (SsuB), two transmembrane proteins (SsuC) and a solute-binding protein (SsuA).

It localises to the cell inner membrane. It carries out the reaction ATP + H2O + aliphatic sulfonate-[sulfonate-binding protein]Side 1 = ADP + phosphate + aliphatic sulfonateSide 2 + [sulfonate-binding protein]Side 1.. Functionally, part of the ABC transporter complex SsuABC involved in aliphatic sulfonates import. Responsible for energy coupling to the transport system. The protein is Aliphatic sulfonates import ATP-binding protein SsuB of Pectobacterium atrosepticum (strain SCRI 1043 / ATCC BAA-672) (Erwinia carotovora subsp. atroseptica).